Consider the following 355-residue polypeptide: UDP-N-acetylglucosamine--N-acetylmuramyl-(pentapeptide) pyrophosphoryl-undecaprenol N-acetylglucosamine transferase (355 aa).

Residues 13-15 (TGG), Asn-125, Arg-162, Ser-190, Ile-244, and Gln-289 contribute to the UDP-N-acetyl-alpha-D-glucosamine site.

The protein belongs to the glycosyltransferase 28 family. MurG subfamily.

Its subcellular location is the cell inner membrane. It carries out the reaction di-trans,octa-cis-undecaprenyl diphospho-N-acetyl-alpha-D-muramoyl-L-alanyl-D-glutamyl-meso-2,6-diaminopimeloyl-D-alanyl-D-alanine + UDP-N-acetyl-alpha-D-glucosamine = di-trans,octa-cis-undecaprenyl diphospho-[N-acetyl-alpha-D-glucosaminyl-(1-&gt;4)]-N-acetyl-alpha-D-muramoyl-L-alanyl-D-glutamyl-meso-2,6-diaminopimeloyl-D-alanyl-D-alanine + UDP + H(+). Its pathway is cell wall biogenesis; peptidoglycan biosynthesis. Functionally, cell wall formation. Catalyzes the transfer of a GlcNAc subunit on undecaprenyl-pyrophosphoryl-MurNAc-pentapeptide (lipid intermediate I) to form undecaprenyl-pyrophosphoryl-MurNAc-(pentapeptide)GlcNAc (lipid intermediate II). The sequence is that of UDP-N-acetylglucosamine--N-acetylmuramyl-(pentapeptide) pyrophosphoryl-undecaprenol N-acetylglucosamine transferase from Neisseria gonorrhoeae (strain ATCC 700825 / FA 1090).